Consider the following 92-residue polypeptide: Trp operon repressor homolog (92 aa).

A DNA-binding region spans residues 56 to 79; the sequence is QREVASKLGVSITKITRGAANLQD.

It belongs to the TrpR family. As to quaternary structure, homodimer.

The protein localises to the cytoplasm. Functionally, this protein is an aporepressor. When complexed with L-tryptophan it binds the operator region of the trp operon and prevents the initiation of transcription. The polypeptide is Trp operon repressor homolog (Xylella fastidiosa (strain M23)).